A 151-amino-acid chain; its full sequence is Ribonuclease H (151 aa).

An RNase H type-1 domain is found at 1 to 143 (MYKKIEIFTD…CDQLARLAAK (143 aa)). The Mg(2+) site is built by Asp-10, Glu-48, Asp-70, and Asp-135.

The protein belongs to the RNase H family. As to quaternary structure, monomer. It depends on Mg(2+) as a cofactor.

The protein localises to the cytoplasm. The enzyme catalyses Endonucleolytic cleavage to 5'-phosphomonoester.. Functionally, endonuclease that specifically degrades the RNA of RNA-DNA hybrids. This chain is Ribonuclease H, found in Blochmanniella pennsylvanica (strain BPEN).